Reading from the N-terminus, the 450-residue chain is 23S rRNA (uracil(1939)-C(5))-methyltransferase RlmD (450 aa).

[4Fe-4S] cluster-binding residues include cysteine 81, cysteine 87, cysteine 90, and cysteine 173. Glutamine 276, phenylalanine 305, asparagine 310, glutamate 326, aspartate 353, and aspartate 372 together coordinate S-adenosyl-L-methionine. Cysteine 402 acts as the Nucleophile in catalysis.

The protein belongs to the class I-like SAM-binding methyltransferase superfamily. RNA M5U methyltransferase family. RlmD subfamily.

The enzyme catalyses uridine(1939) in 23S rRNA + S-adenosyl-L-methionine = 5-methyluridine(1939) in 23S rRNA + S-adenosyl-L-homocysteine + H(+). Its function is as follows. Catalyzes the formation of 5-methyl-uridine at position 1939 (m5U1939) in 23S rRNA. The protein is 23S rRNA (uracil(1939)-C(5))-methyltransferase RlmD of Idiomarina loihiensis (strain ATCC BAA-735 / DSM 15497 / L2-TR).